Consider the following 94-residue polypeptide: uncharacterized protein (94 aa).

The disordered stretch occupies residues 1-23 (MVLLAGTRPQGGEARCMIPPPPS).

This is an uncharacterized protein from Homo sapiens (Human).